Here is a 354-residue protein sequence, read N- to C-terminus: Biotin synthase (354 aa).

One can recognise a Radical SAM core domain in the interval 41–265; sequence NEVQISRLLS…IMPHSRVRLS (225 aa). [4Fe-4S] cluster is bound by residues Cys-56, Cys-60, and Cys-63. The [2Fe-2S] cluster site is built by Cys-100, Cys-131, Cys-191, and Arg-263.

Belongs to the radical SAM superfamily. Biotin synthase family. In terms of assembly, homodimer. Requires [4Fe-4S] cluster as cofactor. [2Fe-2S] cluster serves as cofactor.

The catalysed reaction is (4R,5S)-dethiobiotin + (sulfur carrier)-SH + 2 reduced [2Fe-2S]-[ferredoxin] + 2 S-adenosyl-L-methionine = (sulfur carrier)-H + biotin + 2 5'-deoxyadenosine + 2 L-methionine + 2 oxidized [2Fe-2S]-[ferredoxin]. The protein operates within cofactor biosynthesis; biotin biosynthesis; biotin from 7,8-diaminononanoate: step 2/2. Functionally, catalyzes the conversion of dethiobiotin (DTB) to biotin by the insertion of a sulfur atom into dethiobiotin via a radical-based mechanism. This is Biotin synthase from Shewanella sediminis (strain HAW-EB3).